The chain runs to 136 residues: ATP synthase epsilon chain, chloroplastic (136 aa).

This sequence belongs to the ATPase epsilon chain family. In terms of assembly, F-type ATPases have 2 components, CF(1) - the catalytic core - and CF(0) - the membrane proton channel. CF(1) has five subunits: alpha(3), beta(3), gamma(1), delta(1), epsilon(1). CF(0) has three main subunits: a, b and c.

The protein localises to the plastid. Its subcellular location is the chloroplast thylakoid membrane. Functionally, produces ATP from ADP in the presence of a proton gradient across the membrane. The chain is ATP synthase epsilon chain, chloroplastic from Chaetosphaeridium globosum (Charophycean green alga).